A 537-amino-acid polypeptide reads, in one-letter code: Serendipity locus protein alpha (537 aa).

Its subcellular location is the cytoplasm. The protein localises to the cell membrane. Functionally, required for the cellularization of the syncytial blastoderm embryo. Involved in the localization of the actin filaments just prior to and during plasma membrane invagination. Sry-alpha together with nullo and bnk may provide auxiliary functions, by acting both to stabilize a large and dynamic microfilament structure and regulate its functions. In Drosophila virilis (Fruit fly), this protein is Serendipity locus protein alpha (Sry-alpha).